The sequence spans 215 residues: Translation initiation factor 6 (215 aa).

Belongs to the eIF-6 family.

Its function is as follows. Binds to the 50S ribosomal subunit and prevents its association with the 30S ribosomal subunit to form the 70S initiation complex. This chain is Translation initiation factor 6, found in Archaeoglobus fulgidus (strain ATCC 49558 / DSM 4304 / JCM 9628 / NBRC 100126 / VC-16).